Consider the following 302-residue polypeptide: HTH-type transcriptional regulator ArgP (302 aa).

Positions Pro-4–Thr-60 constitute an HTH lysR-type domain. A DNA-binding region (H-T-H motif) is located at residues Phe-21–Lys-40.

The protein belongs to the LysR transcriptional regulatory family. Homodimer.

In terms of biological role, controls the transcription of genes involved in arginine and lysine metabolism. In Yersinia pseudotuberculosis serotype O:1b (strain IP 31758), this protein is HTH-type transcriptional regulator ArgP.